The sequence spans 37 residues: Large ribosomal subunit protein bL36 (37 aa).

The protein belongs to the bacterial ribosomal protein bL36 family.

The sequence is that of Large ribosomal subunit protein bL36 from Micrococcus luteus (strain ATCC 4698 / DSM 20030 / JCM 1464 / CCM 169 / CCUG 5858 / IAM 1056 / NBRC 3333 / NCIMB 9278 / NCTC 2665 / VKM Ac-2230) (Micrococcus lysodeikticus).